A 651-amino-acid chain; its full sequence is Bromodomain-containing protein 7 (651 aa).

2 disordered regions span residues 36 to 133 (ELST…EVEQ) and 257 to 298 (KDKV…KKKD). Residues 58 to 69 (HKDRKRKKRKKG) show a composition bias toward basic residues. Residues 65 to 96 (KRKKGEKQVPGEEKEKRKRKVKEDKRKRDREH) carry the Nuclear localization signal motif. Over residues 70 to 105 (EKQVPGEEKEKRKRKVKEDKRKRDREHPDSEGEQEL) the composition is skewed to basic and acidic residues. The Bromo domain occupies 131-235 (VEQTPLQEAL…HSGMKILSQE (105 aa)). Residues 271 to 298 (GSGKDKGEPVDGDTKAFKTPNKEHKKKD) are compositionally biased toward basic and acidic residues. Residues 533-564 (SEEAEIFQRKLDETTKLLRELQDAQNERLSTK) adopt a coiled-coil conformation.

It is found in the nucleus. Its subcellular location is the chromosome. Its function is as follows. Acts both as coactivator and as corepressor. May play a role in chromatin remodeling. Participates in the Wnt signaling pathway. Transcriptional corepressor that down-regulates the expression of target genes. Binds to target promoters, leading to increased histone H3 acetylation. Coactivator for TP53-mediated activation of transcription of a set of target genes. Required for TP53-mediated cell-cycle arrest in response to oncogene activation. Inhibits cell cycle progression from G1 to S phase. This Gallus gallus (Chicken) protein is Bromodomain-containing protein 7 (BRD7).